We begin with the raw amino-acid sequence, 152 residues long: UPF0178 protein KPN78578_03210 (152 aa).

This sequence belongs to the UPF0178 family.

This chain is UPF0178 protein KPN78578_03210, found in Klebsiella pneumoniae subsp. pneumoniae (strain ATCC 700721 / MGH 78578).